A 740-amino-acid polypeptide reads, in one-letter code: Anaphase-promoting complex subunit 5 (740 aa).

Position 180 is a phosphoserine (Ser180). TPR repeat units follow at residues Gln194 to Asp234, Phe235 to Leu285, Arg286 to His322, Val323 to Ser363, Leu364 to Ile403, Asp404 to Phe451, Ala452 to Asn485, Ser486 to Gly525, Ile526 to Val565, Ile566 to Ala605, Ser606 to Lys645, Gly646 to Glu681, and Ala682 to Ile721. A Phosphothreonine modification is found at Thr217.

It belongs to the APC5 family. As to quaternary structure, the mammalian APC/C is composed at least of 14 distinct subunits ANAPC1, ANAPC2, CDC27/APC3, ANAPC4, ANAPC5, CDC16/APC6, ANAPC7, CDC23/APC8, ANAPC10, ANAPC11, CDC26/APC12, ANAPC13, ANAPC15 and ANAPC16 that assemble into a complex of at least 19 chains with a combined molecular mass of around 1.2 MDa; APC/C interacts with FZR1 and FBXO5.

The protein resides in the nucleus. Its subcellular location is the cytoplasm. It is found in the cytoskeleton. The protein localises to the spindle. It participates in protein modification; protein ubiquitination. Functionally, component of the anaphase promoting complex/cyclosome (APC/C), a cell cycle-regulated E3 ubiquitin ligase that controls progression through mitosis and the G1 phase of the cell cycle. The APC/C complex acts by mediating ubiquitination and subsequent degradation of target proteins: it mainly mediates the formation of 'Lys-11'-linked polyubiquitin chains and, to a lower extent, the formation of 'Lys-48'- and 'Lys-63'-linked polyubiquitin chains. The APC/C complex catalyzes assembly of branched 'Lys-11'-/'Lys-48'-linked branched ubiquitin chains on target proteins. The chain is Anaphase-promoting complex subunit 5 (Anapc5) from Mus musculus (Mouse).